Reading from the N-terminus, the 378-residue chain is SWI/SNF-related matrix-associated actin-dependent regulator of chromatin subfamily B member 1 (378 aa).

Residues Met1–Ser106 form a DNA-binding region.

Belongs to the SNF5 family. In terms of assembly, component of the multiprotein chromatin-remodeling complexes SWI/SNF. Component of neural progenitors-specific chromatin remodeling complex (npBAF complex) and the neuron-specific chromatin remodeling complex (nBAF complex). Component of the BAF (SWI/SNF) chromatin remodeling complex. Component of the SWI/SNF-B (PBAF) chromatin remodeling complex. Binds to double-stranded DNA.

It localises to the nucleus. In terms of biological role, involved in chromatin-remodeling. Core component of the BAF (SWI/SNF) complex. This ATP-dependent chromatin-remodeling complex plays important roles in cell proliferation and differentiation, in cellular antiviral activities and inhibition of tumor formation. Belongs to the neural progenitors-specific chromatin remodeling complex (npBAF complex) and the neuron-specific chromatin remodeling complex (nBAF complex) and may play a role in neural development. The sequence is that of SWI/SNF-related matrix-associated actin-dependent regulator of chromatin subfamily B member 1 (smarcb1) from Xenopus tropicalis (Western clawed frog).